The sequence spans 333 residues: Ribosomal protein L11 methyltransferase (333 aa).

S-adenosyl-L-methionine is bound by residues Thr-160, Gly-181, Asp-203, and Asn-267.

The protein belongs to the methyltransferase superfamily. PrmA family.

The protein resides in the cytoplasm. The catalysed reaction is L-lysyl-[protein] + 3 S-adenosyl-L-methionine = N(6),N(6),N(6)-trimethyl-L-lysyl-[protein] + 3 S-adenosyl-L-homocysteine + 3 H(+). Methylates ribosomal protein L11. The chain is Ribosomal protein L11 methyltransferase from Lachnoclostridium phytofermentans (strain ATCC 700394 / DSM 18823 / ISDg) (Clostridium phytofermentans).